Reading from the N-terminus, the 552-residue chain is Oxygen-dependent choline dehydrogenase (552 aa).

Position 7–36 (7–36 (DYIIIGAGSAGNVLAARLTEDKDTTVLLLE)) interacts with FAD. Catalysis depends on histidine 477, which acts as the Proton acceptor.

The protein belongs to the GMC oxidoreductase family. Requires FAD as cofactor.

The catalysed reaction is choline + A = betaine aldehyde + AH2. It catalyses the reaction betaine aldehyde + NAD(+) + H2O = glycine betaine + NADH + 2 H(+). It functions in the pathway amine and polyamine biosynthesis; betaine biosynthesis via choline pathway; betaine aldehyde from choline (cytochrome c reductase route): step 1/1. Functionally, involved in the biosynthesis of the osmoprotectant glycine betaine. Catalyzes the oxidation of choline to betaine aldehyde and betaine aldehyde to glycine betaine at the same rate. The sequence is that of Oxygen-dependent choline dehydrogenase from Acinetobacter baumannii (strain AB307-0294).